The sequence spans 327 residues: Secondary metabolism regulator LAE1 (327 aa).

This sequence belongs to the methyltransferase superfamily. LaeA methyltransferase family.

It is found in the nucleus. It carries out the reaction L-methionyl-[protein] + S-adenosyl-L-methionine = S-methyl-L-methionyl-[protein] + S-adenosyl-L-homocysteine. Secondary metabolism regulator that controls the expression of the tenuazonic acid biosynthesis cluster. Methyltransferase that performs automethylation. No other methyl-accepting substrate has been identified yet. The polypeptide is Secondary metabolism regulator LAE1 (Pyricularia oryzae (strain 70-15 / ATCC MYA-4617 / FGSC 8958) (Rice blast fungus)).